We begin with the raw amino-acid sequence, 285 residues long: Pantothenate synthetase (285 aa).

ATP is bound at residue 30–37; that stretch reads MGYLHAGH. Histidine 37 acts as the Proton donor in catalysis. (R)-pantoate is bound at residue glutamine 61. Residue glutamine 61 coordinates beta-alanine. 147–150 contacts ATP; sequence GQKD. A (R)-pantoate-binding site is contributed by glutamine 153. Residues valine 176 and 184 to 187 contribute to the ATP site; that span reads LSSR.

Belongs to the pantothenate synthetase family. Homodimer.

The protein localises to the cytoplasm. It carries out the reaction (R)-pantoate + beta-alanine + ATP = (R)-pantothenate + AMP + diphosphate + H(+). It participates in cofactor biosynthesis; (R)-pantothenate biosynthesis; (R)-pantothenate from (R)-pantoate and beta-alanine: step 1/1. Functionally, catalyzes the condensation of pantoate with beta-alanine in an ATP-dependent reaction via a pantoyl-adenylate intermediate. The chain is Pantothenate synthetase from Solidesulfovibrio magneticus (strain ATCC 700980 / DSM 13731 / RS-1) (Desulfovibrio magneticus).